The sequence spans 1901 residues: Protein TIC 214 (1901 aa).

The next 6 membrane-spanning stretches (helical) occupy residues 18–38, 64–84, 87–107, 124–144, 172–192, and 221–241; these read IINSVVVVGLYYGFLTTFSIG, FITGQLMMFISIYYAPLHLAL, PHTITVLALPYLLFHFFWNNH, LSIQCVFLNNLIFQLFNHFIL, VGWLIGHILFMKWLGLVLVWI, and IFSILLFITCVYYLGRIPSPI. Disordered stretches follow at residues 248–299, 797–817, and 1591–1618; these read EASK…EERW, REEQTKREEKKEKDKKGENKR, and IQEAKEPASQGEKERGSDIENKGNLGPV. Positions 256 to 268 are enriched in acidic residues; the sequence is VESEEERDVEIET. The segment covering 1591 to 1611 has biased composition (basic and acidic residues); that stretch reads IQEAKEPASQGEKERGSDIEN.

The protein belongs to the TIC214 family. As to quaternary structure, part of the Tic complex.

Its subcellular location is the plastid. It localises to the chloroplast inner membrane. Functionally, involved in protein precursor import into chloroplasts. May be part of an intermediate translocation complex acting as a protein-conducting channel at the inner envelope. The protein is Protein TIC 214 of Nicotiana sylvestris (Wood tobacco).